An 86-amino-acid chain; its full sequence is Putative membrane protein insertion efficiency factor (86 aa).

Positions 66–86 (PLHEGGDDPVPPRKNDDNREN) are disordered.

This sequence belongs to the UPF0161 family.

Its subcellular location is the cell inner membrane. Functionally, could be involved in insertion of integral membrane proteins into the membrane. The protein is Putative membrane protein insertion efficiency factor of Proteus mirabilis (strain HI4320).